Reading from the N-terminus, the 396-residue chain is Serpin-ZXA (396 aa).

The RCL stretch occupies residues 343–367; the sequence is GTEAAAATAAVITLRSAPIAEDFVA.

It belongs to the serpin family.

Functionally, probable serine protease inhibitor. In Oryza sativa subsp. japonica (Rice), this protein is Serpin-ZXA.